Reading from the N-terminus, the 184-residue chain is (2E)-enoyl-[ACP] glycyltransferase (184 aa).

This sequence belongs to the FcoT family.

The enzyme catalyses a (3R)-3-[(carboxymethyl)amino]fatty acid + holo-[ACP] + H(+) = a (2E)-enoyl-[ACP] + glycine + H2O. The catalysed reaction is (3R)-3-[(carboxylmethyl)amino]decanoate + holo-[ACP] + H(+) = (2E)-decenoyl-[ACP] + glycine + H2O. Involved in the biosynthesis of a unique class of isonitrile lipopeptides (INLPs) that seem to play a role in metal acquisition in M.marinum. Catalyzes a Michael addition of glycine to the beta-position of an alpha,beta-unsaturated fatty acyl-[ACP], producing a (3R)-3-[(carboxymethyl)amino]fatty acid. Acts on the (2E)-decenoyl moiety loaded on the acyl-carrier protein MmaB, forming the product (3R)-3-[(carboxymethyl)amino]decanoate released from MmaB. In Mycobacterium marinum (strain ATCC BAA-535 / M), this protein is (2E)-enoyl-[ACP] glycyltransferase.